The following is a 726-amino-acid chain: Sensory/regulatory protein RpfC (726 aa).

Over 1 to 22 (MKSPLPWLKRRLSGRADSEHAQ) the chain is Periplasmic. Residues 1-22 (MKSPLPWLKRRLSGRADSEHAQ) are sensor. Residues 23–40 (NLIRIIITTLFISYLGWR) traverse the membrane as a helical segment. Residues 41 to 51 (YQHTHGDTLMA) are Cytoplasmic-facing. The chain crosses the membrane as a helical span at residues 52–72 (TWLILVGELLVSLGLMVAILL). Over 73 to 94 (RPQVSHTRRLIGMLLDYTCTGA) the chain is Periplasmic. Residues 95-115 (IMAIQGEPASPLYAVCMWVTI) form a helical membrane-spanning segment. Over 116–127 (GNGLRYGSNYLR) the chain is Cytoplasmic. The helical transmembrane segment at 128 to 148 (AATAMGSLCFLGAILISPYWK) threads the bilayer. Residues 149-151 (ANP) are Periplasmic-facing. Residues 152–172 (YLSWGLLLGLIAVPLYFDSLL) traverse the membrane as a helical segment. Topologically, residues 173–726 (RAMTRAVREA…DGECSPRSNE (554 aa)) are cytoplasmic. In terms of domain architecture, Histidine kinase spans 195-417 (NMSHEFRTPL…VFWFELPMAI (223 aa)). His-198 carries the phosphohistidine; by autocatalysis modification. One can recognise a Response regulatory domain in the interval 463-581 (RMLVADDHEA…KLLDTLADLA (119 aa)). Asp-512 carries the post-translational modification 4-aspartylphosphate. Positions 618–711 (GEEFERQFVR…KAGKDALDAR (94 aa)) constitute an HPt domain. His-657 is subject to Phosphohistidine.

As to quaternary structure, at low DSF concentrations, interacts with RpfF. Post-translationally, autophosphorylated. Activation may require a sequential transfer of a phosphate group from a His in the primary transmitter domain, to an Asp in the receiver domain and to a His in the secondary transmitter domain.

The protein localises to the cell inner membrane. It carries out the reaction ATP + protein L-histidine = ADP + protein N-phospho-L-histidine.. With respect to regulation, binding of DSF to the sensor region causes allosteric change, which facilitates RpfC autophosphorylation. In terms of biological role, hybrid sensor kinase that regulates diverse biological functions through two distinct molecular mechanisms. At low cell density, the extracellular concentration of the diffusible signaling factor (DSF) is below a threshold, and unphosphorylated RpfC is involved in the negative regulation of DSF synthesis, via direct interaction with the DSF synthase RpfF. Interaction prevents synthesis of DSF, which remains at a basal level. This activity does not involve the phosphorelay mechanism and is not dependent on RpfG. Is also member of the two-component regulatory system RpfG/RpfC, which is involved in the perception and response to DSF, which is essential for cell-cell signaling. At high cell density, the level of extracellular DSF increases and binding of DSF to the sensor region of RpfC causes autophosphorylation of RpfC, which results in the release of RpfF and the activation of RpfG via a four-step phosphorelay. Activation of RpfG leads to the positive regulation of biofilm dispersal and the production of virulence factors. This Xanthomonas campestris pv. campestris (strain 8004) protein is Sensory/regulatory protein RpfC (rpfC).